A 206-amino-acid polypeptide reads, in one-letter code: FMN-dependent NADH:quinone oxidoreductase (206 aa).

FMN is bound by residues Ser-9, 15 to 17 (SVS), and 139 to 142 (SRGG).

It belongs to the azoreductase type 1 family. In terms of assembly, homodimer. The cofactor is FMN.

It catalyses the reaction 2 a quinone + NADH + H(+) = 2 a 1,4-benzosemiquinone + NAD(+). The catalysed reaction is N,N-dimethyl-1,4-phenylenediamine + anthranilate + 2 NAD(+) = 2-(4-dimethylaminophenyl)diazenylbenzoate + 2 NADH + 2 H(+). Quinone reductase that provides resistance to thiol-specific stress caused by electrophilic quinones. In terms of biological role, also exhibits azoreductase activity. Catalyzes the reductive cleavage of the azo bond in aromatic azo compounds to the corresponding amines. This Cupriavidus necator (strain ATCC 17699 / DSM 428 / KCTC 22496 / NCIMB 10442 / H16 / Stanier 337) (Ralstonia eutropha) protein is FMN-dependent NADH:quinone oxidoreductase.